The following is a 158-amino-acid chain: NAD(P)H-quinone oxidoreductase subunit N, organellar chromatophore (158 aa).

It belongs to the complex I NdhN subunit family. As to quaternary structure, NDH-1 can be composed of about 15 different subunits; different subcomplexes with different compositions have been identified which probably have different functions.

The protein localises to the plastid. It localises to the organellar chromatophore thylakoid membrane. The catalysed reaction is a plastoquinone + NADH + (n+1) H(+)(in) = a plastoquinol + NAD(+) + n H(+)(out). It carries out the reaction a plastoquinone + NADPH + (n+1) H(+)(in) = a plastoquinol + NADP(+) + n H(+)(out). NDH-1 shuttles electrons from an unknown electron donor, via FMN and iron-sulfur (Fe-S) centers, to quinones in the respiratory and/or the photosynthetic chain. The immediate electron acceptor for the enzyme in this species is believed to be plastoquinone. Couples the redox reaction to proton translocation, and thus conserves the redox energy in a proton gradient. In Paulinella chromatophora, this protein is NAD(P)H-quinone oxidoreductase subunit N, organellar chromatophore.